A 173-amino-acid chain; its full sequence is Adenine phosphoribosyltransferase (173 aa).

This sequence belongs to the purine/pyrimidine phosphoribosyltransferase family. Homodimer.

It localises to the cytoplasm. The enzyme catalyses AMP + diphosphate = 5-phospho-alpha-D-ribose 1-diphosphate + adenine. It participates in purine metabolism; AMP biosynthesis via salvage pathway; AMP from adenine: step 1/1. Functionally, catalyzes a salvage reaction resulting in the formation of AMP, that is energically less costly than de novo synthesis. The protein is Adenine phosphoribosyltransferase of Listeria monocytogenes serovar 1/2a (strain ATCC BAA-679 / EGD-e).